The following is a 312-amino-acid chain: Pectinesterase inhibitor 10 (312 aa).

The N-terminal stretch at 1-25 (MNILSQTQILHLSIAILLFITTSSS) is a signal peptide. Low complexity-rich tracts occupy residues 24–36 (SSSL…SPSL) and 44–55 (SPSSAPPSSLSP). The segment at 24 to 141 (SSSLSPSSSS…PSSSSSTYSN (118 aa)) is disordered. Residues 56 to 75 (SSPPPLSLSPSSPPPPPPSS) show a composition bias toward pro residues. Low complexity-rich tracts occupy residues 76 to 85 (SPLSSLSPSL) and 93 to 104 (SPSSAPPSSLSP). Positions 105-124 (SSPPPLSLSPSSPPPPPPSS) are enriched in pro residues. The segment covering 125 to 137 (SPLSSLSPSSSSS) has biased composition (low complexity). Asn-141, Asn-153, Asn-185, and Asn-200 each carry an N-linked (GlcNAc...) asparagine glycan. Cys-152 and Cys-161 are oxidised to a cystine. A disulfide bridge links Cys-218 with Cys-268.

It belongs to the PMEI family.

The protein localises to the secreted. It is found in the extracellular space. The protein resides in the apoplast. Pectin methylesterase (PME) inhibitor involved in the maintenance of cell wall integrity in response to necrotrophic pathogens. Modulates PME activity and pectin methylesterification during infection by Botrytis cinerea and contributes to resistance against the pathogen. The sequence is that of Pectinesterase inhibitor 10 from Arabidopsis thaliana (Mouse-ear cress).